Consider the following 385-residue polypeptide: 4-hydroxy-3-methylbut-2-en-1-yl diphosphate synthase (flavodoxin) (385 aa).

[4Fe-4S] cluster contacts are provided by cysteine 280, cysteine 283, cysteine 315, and glutamate 322.

It belongs to the IspG family. [4Fe-4S] cluster is required as a cofactor.

The enzyme catalyses (2E)-4-hydroxy-3-methylbut-2-enyl diphosphate + oxidized [flavodoxin] + H2O + 2 H(+) = 2-C-methyl-D-erythritol 2,4-cyclic diphosphate + reduced [flavodoxin]. The protein operates within isoprenoid biosynthesis; isopentenyl diphosphate biosynthesis via DXP pathway; isopentenyl diphosphate from 1-deoxy-D-xylulose 5-phosphate: step 5/6. Converts 2C-methyl-D-erythritol 2,4-cyclodiphosphate (ME-2,4cPP) into 1-hydroxy-2-methyl-2-(E)-butenyl 4-diphosphate. The chain is 4-hydroxy-3-methylbut-2-en-1-yl diphosphate synthase (flavodoxin) from Streptomyces griseus subsp. griseus (strain JCM 4626 / CBS 651.72 / NBRC 13350 / KCC S-0626 / ISP 5235).